Reading from the N-terminus, the 519-residue chain is Exodeoxyribonuclease 7 large subunit (519 aa).

Residues 500–519 form a disordered region; it reads VGRGKTRKPKEEPPAQGSLL.

The protein belongs to the XseA family. Heterooligomer composed of large and small subunits.

It is found in the cytoplasm. The catalysed reaction is Exonucleolytic cleavage in either 5'- to 3'- or 3'- to 5'-direction to yield nucleoside 5'-phosphates.. Functionally, bidirectionally degrades single-stranded DNA into large acid-insoluble oligonucleotides, which are then degraded further into small acid-soluble oligonucleotides. This Cereibacter sphaeroides (strain KD131 / KCTC 12085) (Rhodobacter sphaeroides) protein is Exodeoxyribonuclease 7 large subunit.